Reading from the N-terminus, the 527-residue chain is Phosphoenolpyruvate carboxykinase (ATP) (527 aa).

Substrate contacts are provided by R56, Y192, and K198. ATP contacts are provided by residues K198, H217, and 233-241 (GLSGTGKTT). Residues K198 and H217 each coordinate Mn(2+). D254 is a Mn(2+) binding site. ATP contacts are provided by E282, R319, and T444. R319 is a substrate binding site.

It belongs to the phosphoenolpyruvate carboxykinase (ATP) family. Mn(2+) is required as a cofactor.

The protein resides in the cytoplasm. The enzyme catalyses oxaloacetate + ATP = phosphoenolpyruvate + ADP + CO2. It functions in the pathway carbohydrate biosynthesis; gluconeogenesis. Involved in the gluconeogenesis. Catalyzes the conversion of oxaloacetate (OAA) to phosphoenolpyruvate (PEP) through direct phosphoryl transfer between the nucleoside triphosphate and OAA. The protein is Phosphoenolpyruvate carboxykinase (ATP) of Bacillus velezensis (strain DSM 23117 / BGSC 10A6 / LMG 26770 / FZB42) (Bacillus amyloliquefaciens subsp. plantarum).